Here is a 348-residue protein sequence, read N- to C-terminus: Lipoyl synthase (348 aa).

[4Fe-4S] cluster is bound by residues cysteine 55, cysteine 60, cysteine 66, cysteine 81, cysteine 85, cysteine 88, and serine 292. Positions 67–281 (WESREATFLI…SDEAYEIGFA (215 aa)) constitute a Radical SAM core domain.

The protein belongs to the radical SAM superfamily. Lipoyl synthase family. [4Fe-4S] cluster serves as cofactor.

It is found in the cytoplasm. The enzyme catalyses [[Fe-S] cluster scaffold protein carrying a second [4Fe-4S](2+) cluster] + N(6)-octanoyl-L-lysyl-[protein] + 2 oxidized [2Fe-2S]-[ferredoxin] + 2 S-adenosyl-L-methionine + 4 H(+) = [[Fe-S] cluster scaffold protein] + N(6)-[(R)-dihydrolipoyl]-L-lysyl-[protein] + 4 Fe(3+) + 2 hydrogen sulfide + 2 5'-deoxyadenosine + 2 L-methionine + 2 reduced [2Fe-2S]-[ferredoxin]. The protein operates within protein modification; protein lipoylation via endogenous pathway; protein N(6)-(lipoyl)lysine from octanoyl-[acyl-carrier-protein]: step 2/2. Functionally, catalyzes the radical-mediated insertion of two sulfur atoms into the C-6 and C-8 positions of the octanoyl moiety bound to the lipoyl domains of lipoate-dependent enzymes, thereby converting the octanoylated domains into lipoylated derivatives. This is Lipoyl synthase from Corynebacterium efficiens (strain DSM 44549 / YS-314 / AJ 12310 / JCM 11189 / NBRC 100395).